Reading from the N-terminus, the 326-residue chain is Serpentine receptor class gamma-14 (326 aa).

Transmembrane regions (helical) follow at residues 36 to 56, 67 to 83, 115 to 135, 156 to 176, 204 to 224, 243 to 263, and 274 to 294; these read QIIY…TILW, FFTL…SILI, IIML…VLLV, LKYV…NIAI, FQLV…AITL, VIIS…SFFF, and GFSF…MICV.

Belongs to the nematode receptor-like protein srg family.

It localises to the membrane. This chain is Serpentine receptor class gamma-14 (srg-14), found in Caenorhabditis elegans.